The chain runs to 861 residues: Probable alpha,alpha-trehalose-phosphate synthase [UDP-forming] 10 (861 aa).

Position 5 is a phosphoserine (serine 5). Threonine 32 carries the post-translational modification Phosphothreonine. The segment at 59–546 (ERKIIVANFL…ARSFSQDLER (488 aa)) is glycosyltransferase.

The protein in the N-terminal section; belongs to the glycosyltransferase 20 family. In the C-terminal section; belongs to the trehalose phosphatase family.

The enzyme catalyses D-glucose 6-phosphate + UDP-alpha-D-glucose = alpha,alpha-trehalose 6-phosphate + UDP + H(+). This is Probable alpha,alpha-trehalose-phosphate synthase [UDP-forming] 10 (TPS10) from Arabidopsis thaliana (Mouse-ear cress).